The sequence spans 231 residues: ATP phosphoribosyltransferase (231 aa).

The protein belongs to the ATP phosphoribosyltransferase family. Short subfamily. In terms of assembly, heteromultimer composed of HisG and HisZ subunits.

It localises to the cytoplasm. The enzyme catalyses 1-(5-phospho-beta-D-ribosyl)-ATP + diphosphate = 5-phospho-alpha-D-ribose 1-diphosphate + ATP. It functions in the pathway amino-acid biosynthesis; L-histidine biosynthesis; L-histidine from 5-phospho-alpha-D-ribose 1-diphosphate: step 1/9. Catalyzes the condensation of ATP and 5-phosphoribose 1-diphosphate to form N'-(5'-phosphoribosyl)-ATP (PR-ATP). Has a crucial role in the pathway because the rate of histidine biosynthesis seems to be controlled primarily by regulation of HisG enzymatic activity. This is ATP phosphoribosyltransferase (hisG) from Sinorhizobium fredii (strain NBRC 101917 / NGR234).